The sequence spans 277 residues: Large ribosomal subunit protein uL2c (277 aa).

The tract at residues 224–257 (VMNPIDHPHGGGEGRAPIGRKKPLTPWGHPALGR) is disordered.

It belongs to the universal ribosomal protein uL2 family. Part of the 50S ribosomal subunit.

The protein resides in the plastid. It is found in the chloroplast. The sequence is that of Large ribosomal subunit protein uL2c (rpl2) from Anthoceros angustus (Hornwort).